A 492-amino-acid polypeptide reads, in one-letter code: Transmembrane protein 39B (492 aa).

Residues 1-54 (MGGRRGPNRTSYCRNPLCEPGSSGGSSGSHTSSASVTSVRSRTRSSSGTGLSSP) form a disordered region. The N-linked (GlcNAc...) asparagine glycan is linked to Asn-8. Over residues 28-53 (GSHTSSASVTSVRSRTRSSSGTGLSS) the composition is skewed to low complexity. Transmembrane regions (helical) follow at residues 77–97 (SILF…VHYI), 115–135 (TSLN…IVLG), 153–175 (SLFR…GWSL), 185–205 (TYSF…IPFL), 288–308 (EVLV…VWFV), 322–342 (LFLL…LPAS), 421–441 (ILNI…YSLM), and 447–467 (HQTI…FKLL).

It belongs to the TMEM39 family.

It is found in the endoplasmic reticulum membrane. Functionally, may protect the cells against DNA damage caused by exposure to the cold-warming stress and facilitates tissue damage repair during the recovery phase. The chain is Transmembrane protein 39B from Homo sapiens (Human).